A 465-amino-acid polypeptide reads, in one-letter code: Hexokinase-4 (465 aa).

Positions 10–454 (AAKKEKVEQI…SGRGAALVSA (445 aa)) constitute a Hexokinase domain. Residues 67-203 (EGSEVGDFLS…DFEMDVVAMV (137 aa)) form a hexokinase small subdomain region. 78–83 (DLGGTN) contacts ATP. Substrate-binding positions include 151–152 (SF), 168–169 (TK), and 204–205 (ND). The hexokinase large subdomain stretch occupies residues 204–443 (NDTVATMISC…CEITFIESEE (240 aa)). Residue Thr228 coordinates ATP. Positions 231, 256, and 290 each coordinate substrate. ATP-binding positions include 295–296 (GK), 332–336 (TRFVS), and 411–415 (SVYKL).

The protein belongs to the hexokinase family. In terms of assembly, monomer. Interacts with MIDN; the interaction occurs preferentially at low glucose levels and results in inhibition of hexokinase activity. Interacts with GCKR; leading to sequestration in the nucleus.

The protein resides in the cytoplasm. The protein localises to the nucleus. Its subcellular location is the mitochondrion. The enzyme catalyses a D-hexose + ATP = a D-hexose 6-phosphate + ADP + H(+). It carries out the reaction D-fructose + ATP = D-fructose 6-phosphate + ADP + H(+). It catalyses the reaction D-glucose + ATP = D-glucose 6-phosphate + ADP + H(+). The catalysed reaction is D-mannose + ATP = D-mannose 6-phosphate + ADP + H(+). It participates in carbohydrate metabolism; hexose metabolism. It functions in the pathway carbohydrate degradation; glycolysis; D-glyceraldehyde 3-phosphate and glycerone phosphate from D-glucose: step 1/4. Subject to allosteric regulation. Low glucose and high fructose-6-phosphate triggers association with the inhibitor GCKR followed by sequestration in the nucleus. Functionally, catalyzes the phosphorylation of hexose, such as D-glucose, D-fructose and D-mannose, to hexose 6-phosphate (D-glucose 6-phosphate, D-fructose 6-phosphate and D-mannose 6-phosphate, respectively). Compared to other hexokinases, has a weak affinity for D-glucose, and is effective only when glucose is abundant. Mainly expressed in pancreatic beta cells and the liver and constitutes a rate-limiting step in glucose metabolism in these tissues. Since insulin secretion parallels glucose metabolism and the low glucose affinity of GCK ensures that it can change its enzymatic activity within the physiological range of glucose concentrations, GCK acts as a glucose sensor in the pancreatic beta cell. In pancreas, plays an important role in modulating insulin secretion. In liver, helps to facilitate the uptake and conversion of glucose by acting as an insulin-sensitive determinant of hepatic glucose usage. Required to provide D-glucose 6-phosphate for the synthesis of glycogen. Mediates the initial step of glycolysis by catalyzing phosphorylation of D-glucose to D-glucose 6-phosphate. The sequence is that of Hexokinase-4 from Homo sapiens (Human).